The chain runs to 222 residues: Ribonuclease T (222 aa).

The 175-residue stretch at 20 to 194 (VVIDVETAGF…YDTERTAELF (175 aa)) folds into the Exonuclease domain. Mg(2+) contacts are provided by Asp-23, Glu-25, His-181, and Asp-186. The active-site Proton donor/acceptor is the His-181.

The protein belongs to the RNase T family. As to quaternary structure, homodimer. Mg(2+) is required as a cofactor.

In terms of biological role, trims short 3' overhangs of a variety of RNA species, leaving a one or two nucleotide 3' overhang. Responsible for the end-turnover of tRNA: specifically removes the terminal AMP residue from uncharged tRNA (tRNA-C-C-A). Also appears to be involved in tRNA biosynthesis. This is Ribonuclease T from Shewanella oneidensis (strain ATCC 700550 / JCM 31522 / CIP 106686 / LMG 19005 / NCIMB 14063 / MR-1).